The chain runs to 163 residues: Nucleotide-binding protein C8J_0350 (163 aa).

It belongs to the YajQ family.

Nucleotide-binding protein. This is Nucleotide-binding protein C8J_0350 from Campylobacter jejuni subsp. jejuni serotype O:6 (strain 81116 / NCTC 11828).